The sequence spans 411 residues: Metal-binding regulatory protein cuf1 (411 aa).

The copper-fist DNA-binding region spans 1–40 (MVVINNVKMACMKCIRGHRSSTCKHNDRELFPIRPKGRPI). 4 residues coordinate Zn(2+): Cys-11, Cys-14, Cys-23, and His-25. The interval 63 to 92 (SRKKGSKCSTSSTTDLDSSSASNSSCSIPS) is disordered. The span at 69–92 (KCSTSSTTDLDSSSASNSSCSIPS) shows a compositional bias: low complexity.

The protein localises to the cytoplasm. Its subcellular location is the nucleus. In terms of biological role, copper-sensing transcription factor that regulates iron uptake genes. Under copper starvation conditions activates the transcription of the copper transport genes, ctr4, ctr5 and ctr6. The sequence is that of Metal-binding regulatory protein cuf1 (cuf1) from Schizosaccharomyces pombe (strain 972 / ATCC 24843) (Fission yeast).